The sequence spans 321 residues: Peroxidase 5 (321 aa).

Positions 1 to 24 (MERFSLRFVLMMVSIILTSSICQA) are cleaved as a signal peptide. The residue at position 25 (Gln-25) is a Pyrrolidone carboxylic acid. 4 disulfide bridges follow: Cys-35-Cys-115, Cys-68-Cys-73, Cys-121-Cys-317, and Cys-201-Cys-227. The active-site Proton acceptor is the His-66. Residues Asp-67, Val-70, Gly-72, Asp-74, and Ser-76 each coordinate Ca(2+). Substrate is bound at residue Pro-164. Position 194 (His-194) interacts with heme b. Residue Thr-195 participates in Ca(2+) binding. A glycan (N-linked (GlcNAc...) asparagine) is linked at Asn-211. Ca(2+)-binding residues include Asp-240, Thr-243, and Asp-248. A glycan (N-linked (GlcNAc...) asparagine) is linked at Asn-285.

It belongs to the peroxidase family. Classical plant (class III) peroxidase subfamily. The cofactor is heme b. It depends on Ca(2+) as a cofactor.

The protein resides in the secreted. The enzyme catalyses 2 a phenolic donor + H2O2 = 2 a phenolic radical donor + 2 H2O. Removal of H(2)O(2), oxidation of toxic reductants, biosynthesis and degradation of lignin, suberization, auxin catabolism, response to environmental stresses such as wounding, pathogen attack and oxidative stress. These functions might be dependent on each isozyme/isoform in each plant tissue. This is Peroxidase 5 (PER5) from Arabidopsis thaliana (Mouse-ear cress).